The following is a 308-amino-acid chain: 3'(2'),5'-bisphosphate nucleotidase 1 (308 aa).

The residue at position 2 (alanine 2) is an N-acetylalanine. The active-site Proton acceptor is aspartate 51. Mg(2+) is bound by residues glutamate 74, aspartate 117, valine 119, and aspartate 120. Threonine 122 (proton acceptor) is an active-site residue. Threonine 122 carries the phosphothreonine modification. AMP-binding residues include threonine 195, histidine 198, glycine 220, and lysine 224. Serine 240 is modified (phosphoserine). Lysine 244 bears the N6-succinyllysine mark. Aspartate 247 is a Mg(2+) binding site.

It belongs to the inositol monophosphatase superfamily. It depends on Mg(2+) as a cofactor. As to expression, highly expressed in heart, brain, spleen, lung, liver, skeletal muscle, kidney and testis.

The catalysed reaction is adenosine 3',5'-bisphosphate + H2O = AMP + phosphate. It catalyses the reaction adenosine 2',5'-bisphosphate + H2O = AMP + phosphate. The enzyme catalyses 3'-phosphoadenylyl sulfate + H2O = adenosine 5'-phosphosulfate + phosphate. It carries out the reaction 1D-myo-inositol 1,4-bisphosphate + H2O = 1D-myo-inositol 4-phosphate + phosphate. The catalysed reaction is 1D-myo-inositol 1,3,4-trisphosphate + H2O = 1D-myo-inositol 3,4-bisphosphate + phosphate. Its activity is regulated as follows. Inhibited by Li(+) and Ca(2+), but not by Na(+). Functionally, phosphatase that converts 3'(2')-phosphoadenosine 5'-phosphate (PAP) to AMP and adenosine 3'-phosphate 5'-phosphosulfate (PAPS) to adenosine 5'-phosphosulfate (APS). Is also able to hydrolyze inositol 1,4-bisphosphate (Ins(1,4)P2) and inositol 1,3,4-trisphosphate (Ins(1,3,4)P3), but is not active on AMP, 3'-AMP, fructose-1,6-bisphosphate, Ins(1)P, Ins(2)P and Ins(1,4,5)P3. Probably prevents the toxic accumulation of PAP, a compound which inhibits a variety of proteins, including PAPS-utilizing enzymes such as sulfotransferases, and RNA processing enzymes. Could also play a role in inositol recycling and phosphoinositide metabolism. The chain is 3'(2'),5'-bisphosphate nucleotidase 1 (Bpnt1) from Rattus norvegicus (Rat).